We begin with the raw amino-acid sequence, 309 residues long: Glutaminase (309 aa).

Substrate is bound by residues Ser65, Asn117, Glu162, Asn169, Tyr193, Tyr245, and Val263.

The protein belongs to the glutaminase family. As to quaternary structure, homotetramer.

It carries out the reaction L-glutamine + H2O = L-glutamate + NH4(+). In Shouchella clausii (strain KSM-K16) (Alkalihalobacillus clausii), this protein is Glutaminase.